Here is a 430-residue protein sequence, read N- to C-terminus: Serine--tRNA ligase (430 aa).

Thr-237–Glu-239 contacts L-serine. Residue Arg-268 to Glu-270 coordinates ATP. Glu-291 serves as a coordination point for L-serine. Glu-355–Ser-358 contributes to the ATP binding site. An L-serine-binding site is contributed by Ser-391.

The protein belongs to the class-II aminoacyl-tRNA synthetase family. Type-1 seryl-tRNA synthetase subfamily. In terms of assembly, homodimer. The tRNA molecule binds across the dimer.

The protein localises to the cytoplasm. The catalysed reaction is tRNA(Ser) + L-serine + ATP = L-seryl-tRNA(Ser) + AMP + diphosphate + H(+). It carries out the reaction tRNA(Sec) + L-serine + ATP = L-seryl-tRNA(Sec) + AMP + diphosphate + H(+). It participates in aminoacyl-tRNA biosynthesis; selenocysteinyl-tRNA(Sec) biosynthesis; L-seryl-tRNA(Sec) from L-serine and tRNA(Sec): step 1/1. Its function is as follows. Catalyzes the attachment of serine to tRNA(Ser). Is also able to aminoacylate tRNA(Sec) with serine, to form the misacylated tRNA L-seryl-tRNA(Sec), which will be further converted into selenocysteinyl-tRNA(Sec). The polypeptide is Serine--tRNA ligase (Magnetococcus marinus (strain ATCC BAA-1437 / JCM 17883 / MC-1)).